The sequence spans 149 residues: Myosin, essential light chain (149 aa).

EF-hand domains are found at residues 7–42 (SMID…FGLN) and 79–114 (GSYE…LGEK).

As to quaternary structure, myosin is a hexamer of 2 heavy chains and 4 light chains (two regulatory light chains and two essential light chains).

The polypeptide is Myosin, essential light chain (Branchiostoma floridae (Florida lancelet)).